The sequence spans 347 residues: GDT1-like protein 2, chloroplastic (347 aa).

A chloroplast-targeting transit peptide spans 1-12; sequence MATAISVGVAVP. Residues 70–97 are disordered; the sequence is EAGSHGEHLDSSATRDSNKPTKPPSGSR. The next 7 membrane-spanning stretches (helical) occupy residues 99–119, 124–144, 165–185, 196–216, 257–277, 299–319, and 327–347; these read PQSI…IVFF, SAVV…LIFV, ALVL…SVII, FQTT…FFGF, LTSP…AEWG, GAIA…AFLA, and VGLI…FGVF.

The protein belongs to the GDT1 family.

It localises to the plastid. Its subcellular location is the chloroplast membrane. The polypeptide is GDT1-like protein 2, chloroplastic (Oryza sativa subsp. japonica (Rice)).